The sequence spans 219 residues: Uracil-DNA glycosylase (219 aa).

Aspartate 61 functions as the Proton acceptor in the catalytic mechanism.

The protein belongs to the uracil-DNA glycosylase (UDG) superfamily. UNG family.

It is found in the cytoplasm. The catalysed reaction is Hydrolyzes single-stranded DNA or mismatched double-stranded DNA and polynucleotides, releasing free uracil.. Functionally, excises uracil residues from the DNA which can arise as a result of misincorporation of dUMP residues by DNA polymerase or due to deamination of cytosine. The chain is Uracil-DNA glycosylase from Haemophilus influenzae (strain 86-028NP).